Reading from the N-terminus, the 163-residue chain is Protein EARLY RESPONSIVE TO DEHYDRATION 15 (163 aa).

The PAM2-like signature appears at 10-20 (TLNPDAPLFIP). The disordered stretch occupies residues 118–163 (NGEMVKKSSGNRSPRSIVEPAKYAEKPAKWGNQRVAAAPRNIHQPR).

Interacts with PAB2, PAB4 and PAB8. Interacts with MPC. In terms of tissue distribution, expressed in cauline leaves, stems, rosette leaves, immature siliques and primary inflorescences.

It is found in the cytoplasm. In terms of biological role, central component of stress responses that interacts with poly(A)-binding proteins. Negative regulator of abscisic acid (ABA) responses, including resistance to drought and freezing as well as stomatal closure regulation. Mediates resistance to the bacterial necrotroph pathogen Erwinia carotovora subsp. carotovora and promotes the induction of marker genes for systemic acquired resistance (SAR). The polypeptide is Protein EARLY RESPONSIVE TO DEHYDRATION 15 (ERD15) (Arabidopsis thaliana (Mouse-ear cress)).